The primary structure comprises 144 residues: Transcription antitermination protein NusB (144 aa).

Belongs to the NusB family.

Functionally, involved in transcription antitermination. Required for transcription of ribosomal RNA (rRNA) genes. Binds specifically to the boxA antiterminator sequence of the ribosomal RNA (rrn) operons. The sequence is that of Transcription antitermination protein NusB from Haemophilus influenzae (strain PittGG).